A 312-amino-acid polypeptide reads, in one-letter code: Structure-specific endonuclease subunit SLX1 (312 aa).

The 84-residue stretch at Asp-9–Lys-92 folds into the GIY-YIG domain. Residues Cys-219–Cys-282 form an SLX1-type zinc finger.

The protein belongs to the SLX1 family. As to quaternary structure, forms a heterodimer with SLX4. The cofactor is a divalent metal cation.

It is found in the nucleus. Catalytic subunit of the SLX1-SLX4 structure-specific endonuclease that resolves DNA secondary structures generated during DNA repair and recombination. Has endonuclease activity towards branched DNA substrates, introducing single-strand cuts in duplex DNA close to junctions with ss-DNA. The protein is Structure-specific endonuclease subunit SLX1 of Candida glabrata (strain ATCC 2001 / BCRC 20586 / JCM 3761 / NBRC 0622 / NRRL Y-65 / CBS 138) (Yeast).